A 557-amino-acid chain; its full sequence is TBCC domain-containing protein 1 (557 aa).

One can recognise a C-CAP/cofactor C-like domain in the interval 290-435 (TTKRAKIACN…LEDHMARTGL (146 aa)).

It belongs to the TBCC family.

It is found in the cytoplasm. It localises to the cytoskeleton. Its subcellular location is the microtubule organizing center. The protein localises to the centrosome. The protein resides in the spindle pole. Its function is as follows. Plays a role in the regulation of centrosome and Golgi apparatus positioning, with consequences on cell shape and cell migration. In Bos taurus (Bovine), this protein is TBCC domain-containing protein 1 (TBCCD1).